Here is a 164-residue protein sequence, read N- to C-terminus: 2-C-methyl-D-erythritol 2,4-cyclodiphosphate synthase (164 aa).

A divalent metal cation contacts are provided by Asp-8 and His-10. 4-CDP-2-C-methyl-D-erythritol 2-phosphate is bound by residues 8 to 10 (DVH) and 34 to 35 (HS). His-42 lines the a divalent metal cation pocket. Residues 56–58 (DIG), 132–135 (TTEE), Phe-139, and Lys-142 each bind 4-CDP-2-C-methyl-D-erythritol 2-phosphate.

This sequence belongs to the IspF family. In terms of assembly, homotrimer. A divalent metal cation serves as cofactor.

The enzyme catalyses 4-CDP-2-C-methyl-D-erythritol 2-phosphate = 2-C-methyl-D-erythritol 2,4-cyclic diphosphate + CMP. The protein operates within isoprenoid biosynthesis; isopentenyl diphosphate biosynthesis via DXP pathway; isopentenyl diphosphate from 1-deoxy-D-xylulose 5-phosphate: step 4/6. Involved in the biosynthesis of isopentenyl diphosphate (IPP) and dimethylallyl diphosphate (DMAPP), two major building blocks of isoprenoid compounds. Catalyzes the conversion of 4-diphosphocytidyl-2-C-methyl-D-erythritol 2-phosphate (CDP-ME2P) to 2-C-methyl-D-erythritol 2,4-cyclodiphosphate (ME-CPP) with a corresponding release of cytidine 5-monophosphate (CMP). This is 2-C-methyl-D-erythritol 2,4-cyclodiphosphate synthase from Clostridium kluyveri (strain NBRC 12016).